The chain runs to 221 residues: ATP phosphoribosyltransferase (221 aa).

The protein belongs to the ATP phosphoribosyltransferase family. Short subfamily. Heteromultimer composed of HisG and HisZ subunits.

The protein resides in the cytoplasm. It catalyses the reaction 1-(5-phospho-beta-D-ribosyl)-ATP + diphosphate = 5-phospho-alpha-D-ribose 1-diphosphate + ATP. It functions in the pathway amino-acid biosynthesis; L-histidine biosynthesis; L-histidine from 5-phospho-alpha-D-ribose 1-diphosphate: step 1/9. Its function is as follows. Catalyzes the condensation of ATP and 5-phosphoribose 1-diphosphate to form N'-(5'-phosphoribosyl)-ATP (PR-ATP). Has a crucial role in the pathway because the rate of histidine biosynthesis seems to be controlled primarily by regulation of HisG enzymatic activity. This chain is ATP phosphoribosyltransferase, found in Neisseria gonorrhoeae (strain ATCC 700825 / FA 1090).